A 305-amino-acid chain; its full sequence is MRHPREENSIVVELEPSLATFIKQGFNNLVKWPLLNIGIVLSNTSTAINEEWLTVVEHIPTMKIFYKHIHKILTREMGFLVYLKRSQSERDNYITLYDFDYYIIDKDTNSVTMVDKPTELKETLLHVFQEYRLKSSQTIELIAFSSGTVINEDIVSKLTFLDVEVFNREYNNVKTIMNPDFVSRSPFIVISPMGKLTFFVEVYSWFDFKSCFKDIIDFLEGALIANIHNHMIKVGDCDETVSSYNPESGILFVNDLMTMNIVNFFGCNSRLESYHRFDITKVDVELFIKALSDACKKILLASNRL.

It belongs to the poxviridae DNA-directed RNA polymerase 35 kDa subunit family. As to quaternary structure, the DNA-dependent RNA polymerase used for intermediate and late genes expression consists of eight subunits 147 kDa, 133 kDa, 35 kDa, 30 kDa, 22 kDa, 19 kDa, 18 kDa and 7 kDa totalling more than 500 kDa in mass. The same holoenzyme, with the addition of the transcription-specificity factor RAP94, is used for early gene expression.

It is found in the virion. It carries out the reaction RNA(n) + a ribonucleoside 5'-triphosphate = RNA(n+1) + diphosphate. Part of the DNA-dependent RNA polymerase which catalyzes the transcription of viral DNA into RNA using the four ribonucleoside triphosphates as substrates. Responsible for the transcription of early, intermediate and late genes. DNA-dependent RNA polymerase associates with the early transcription factor (ETF), itself composed of D6 and A7, thereby allowing the early genes transcription. Late transcription, and probably also intermediate transcription, require newly synthesized RNA polymerase. The sequence is that of DNA-directed RNA polymerase 35 kDa subunit (OPG156) from Variola virus (isolate Human/India/Ind3/1967) (VARV).